The sequence spans 946 residues: Phosphatidylinositol 4,5-bisphosphate 5-phosphatase INP51 (946 aa).

The region spanning 151-480 (LKKLFSDGTF…YYWLDRTYTK (330 aa)) is the SAC domain. 2 disordered regions span residues 872–902 (SDSI…SDLK) and 927–946 (PKRD…FIER). Residues 936 to 946 (ENEDEPLFIER) show a composition bias toward acidic residues.

It belongs to the synaptojanin family. The protein in the central section; belongs to the inositol 1,4,5-trisphosphate 5-phosphatase family. In terms of assembly, interacts with IRS4 and TAX4.

It localises to the cytoplasm. The protein resides in the cytoskeleton. It is found in the actin patch. It carries out the reaction a 1,2-diacyl-sn-glycero-3-phospho-(1D-myo-inositol-4,5-bisphosphate) + H2O = a 1,2-diacyl-sn-glycero-3-phospho-(1D-myo-inositol 4-phosphate) + phosphate. Its activity is regulated as follows. IRS4 and TAX4 are both positive regulator of INP51 activity and phosphatidylinositol 4,5-bisphosphate turnover. Functionally, controls the cellular levels and subcellular distribution of phosphatidylinositol 4,5-bisphosphate (PtdIns(4,5)P2). Does not utilize phosphatidylinositol 3,5-bisphosphate (PtdIns(3,5)P2), nor phosphatidylinositol 3-phosphate (PtdIns(3)P) and phosphatidylinositol 4-phosphate (PtdIns(4)P). Plays an essential role in a TGN (trans Golgi network)-to-early endosome pathway. Involved in endocytosis and acts as a negative regulator of the Slm pathway which modulates polarized actin assembly and growth. The protein is Phosphatidylinositol 4,5-bisphosphate 5-phosphatase INP51 (INP51) of Saccharomyces cerevisiae (strain ATCC 204508 / S288c) (Baker's yeast).